We begin with the raw amino-acid sequence, 831 residues long: Periplasmic nitrate reductase (831 aa).

The tat-type signal signal peptide spans 1–29; sequence MTLTRRDLIKAQAAATAAAAAGLPVSALA. Residues 41-97 enclose the 4Fe-4S Mo/W bis-MGD-type domain; that stretch reads IRWSKAPCRFCGTGCGVMVGTRDGQVVATHGDTQAEVNRGLNCVKGYFLSKIMYGED. 4 residues coordinate [4Fe-4S] cluster: C48, C51, C55, and C83. Residues K85, Q152, N177, C181, 214–221, 245–249, 264–266, M375, Q379, N485, 511–512, K534, D561, and 721–730 contribute to the Mo-bis(molybdopterin guanine dinucleotide) site; these read WGSNMAEM, STFTH, GTD, SD, and TGRVLEHWHS. W797 lines the substrate pocket. Residues N805 and K822 each contribute to the Mo-bis(molybdopterin guanine dinucleotide) site.

It belongs to the prokaryotic molybdopterin-containing oxidoreductase family. NasA/NapA/NarB subfamily. Component of the periplasmic nitrate reductase NapAB complex composed of NapA and NapB. [4Fe-4S] cluster is required as a cofactor. Mo-bis(molybdopterin guanine dinucleotide) serves as cofactor. Predicted to be exported by the Tat system. The position of the signal peptide cleavage has not been experimentally proven.

It is found in the periplasm. The enzyme catalyses 2 Fe(II)-[cytochrome] + nitrate + 2 H(+) = 2 Fe(III)-[cytochrome] + nitrite + H2O. Its function is as follows. Catalytic subunit of the periplasmic nitrate reductase complex NapAB. Receives electrons from NapB and catalyzes the reduction of nitrate to nitrite. This is Periplasmic nitrate reductase from Cereibacter sphaeroides (strain ATCC 17023 / DSM 158 / JCM 6121 / CCUG 31486 / LMG 2827 / NBRC 12203 / NCIMB 8253 / ATH 2.4.1.) (Rhodobacter sphaeroides).